We begin with the raw amino-acid sequence, 231 residues long: 5'-methylthioadenosine/S-adenosylhomocysteine nucleosidase (231 aa).

The Proton acceptor role is filled by Glu12. Substrate-binding positions include Gly78, Met153, and 174–175 (ME). The active-site Proton donor is the Asp198.

The protein belongs to the PNP/UDP phosphorylase family. MtnN subfamily.

It carries out the reaction S-adenosyl-L-homocysteine + H2O = S-(5-deoxy-D-ribos-5-yl)-L-homocysteine + adenine. It catalyses the reaction S-methyl-5'-thioadenosine + H2O = 5-(methylsulfanyl)-D-ribose + adenine. The enzyme catalyses 5'-deoxyadenosine + H2O = 5-deoxy-D-ribose + adenine. The protein operates within amino-acid biosynthesis; L-methionine biosynthesis via salvage pathway; S-methyl-5-thio-alpha-D-ribose 1-phosphate from S-methyl-5'-thioadenosine (hydrolase route): step 1/2. In terms of biological role, catalyzes the irreversible cleavage of the glycosidic bond in both 5'-methylthioadenosine (MTA) and S-adenosylhomocysteine (SAH/AdoHcy) to adenine and the corresponding thioribose, 5'-methylthioribose and S-ribosylhomocysteine, respectively. Also cleaves 5'-deoxyadenosine, a toxic by-product of radical S-adenosylmethionine (SAM) enzymes, into 5-deoxyribose and adenine. This chain is 5'-methylthioadenosine/S-adenosylhomocysteine nucleosidase, found in Bacillus anthracis (strain A0248).